A 473-amino-acid polypeptide reads, in one-letter code: Lactate utilization protein B (473 aa).

2 4Fe-4S ferredoxin-type domains span residues 302–332 (GSEF…GHSY) and 351–380 (YDDY…LHDL). C311, C314, C317, C321, C364, C367, and C371 together coordinate [4Fe-4S] cluster.

It belongs to the LutB/YkgF family.

In terms of biological role, is involved in L-lactate degradation and allows cells to grow with lactate as the sole carbon source. Has probably a role as an electron transporter during oxidation of L-lactate. The protein is Lactate utilization protein B of Bacillus anthracis (strain A0248).